The chain runs to 122 residues: Large ribosomal subunit protein eL31 (122 aa).

The protein belongs to the eukaryotic ribosomal protein eL31 family.

This chain is Large ribosomal subunit protein eL31, found in Caenorhabditis elegans.